The chain runs to 330 residues: ADP-L-glycero-D-manno-heptose-6-epimerase (330 aa).

NADP(+) is bound by residues 11–12, 32–33, K39, K54, 75–79, and N92; these read FI, DN, and EGACS. Y139 functions as the Proton acceptor in the catalytic mechanism. K143 is a binding site for NADP(+). Position 168 (N168) interacts with substrate. The NADP(+) site is built by V169 and K177. K177 (proton acceptor) is an active-site residue. Residues R179, H186, 200–203, R213, and Y292 each bind substrate; that span reads FGEY.

This sequence belongs to the NAD(P)-dependent epimerase/dehydratase family. HldD subfamily. As to quaternary structure, homopentamer. It depends on NADP(+) as a cofactor.

It carries out the reaction ADP-D-glycero-beta-D-manno-heptose = ADP-L-glycero-beta-D-manno-heptose. The protein operates within nucleotide-sugar biosynthesis; ADP-L-glycero-beta-D-manno-heptose biosynthesis; ADP-L-glycero-beta-D-manno-heptose from D-glycero-beta-D-manno-heptose 7-phosphate: step 4/4. Functionally, catalyzes the interconversion between ADP-D-glycero-beta-D-manno-heptose and ADP-L-glycero-beta-D-manno-heptose via an epimerization at carbon 6 of the heptose. This is ADP-L-glycero-D-manno-heptose-6-epimerase from Burkholderia vietnamiensis (strain G4 / LMG 22486) (Burkholderia cepacia (strain R1808)).